Reading from the N-terminus, the 67-residue chain is Kappa-conotoxin-like 2 (67 aa).

Residues 1–26 (MMFRLTSVSCFLLVIACLNLFQVVLT) form the signal peptide. 4 cysteine pairs are disulfide-bonded: Cys29–Cys43, Cys36–Cys48, Cys42–Cys51, and Cys47–Cys55. The residue at position 59 (Phe59) is a Phenylalanine amide. The propeptide occupies 63–67 (ATFQE).

Belongs to the conotoxin I2 superfamily. Expressed by the venom duct.

It is found in the secreted. Functionally, inhibits the vertebrate voltage-gated potassium channels Kv1.1/KCNA1 and Kv1.3/KCNA3. In Conus vexillum (Flag cone), this protein is Kappa-conotoxin-like 2.